Here is a 62-residue protein sequence, read N- to C-terminus: uncharacterized protein (62 aa).

Residues Tyr26–Gly62 adopt a coiled-coil conformation.

This is an uncharacterized protein from Bacillus subtilis (strain 168).